Here is a 121-residue protein sequence, read N- to C-terminus: Alpha-endosulfine (121 aa).

Positions 1–53 (MSQKQEEENPAEETGEEKQDTQEKEGILPERAEEAKLKAKYPSLGQKPGGSDF) are disordered. The residue at position 2 (Ser2) is an N-acetylserine. Phosphoserine is present on Ser2. Residues 16–37 (EEKQDTQEKEGILPERAEEAKL) are compositionally biased toward basic and acidic residues. Thr21 bears the Phosphothreonine mark. Ser43 carries the post-translational modification Phosphoserine. Residue Ser67 is modified to Phosphoserine; by GWL. Residues 79–121 (NKQLPSAGPDKNLVTGDHIPTPQDLPQRKSSLVTSKLAGGQVE) form a disordered region. Position 109 is a phosphoserine; by PKA (Ser109).

Belongs to the endosulfine family. As to quaternary structure, interacts (when phosphorylated at Ser-67) with PPP2R2D. Interacts with ABCC8. Interacts with SNCA; interaction is disrupted when phosphorylated at Ser-109. Phosphorylation at Ser-67 by GWL during mitosis is essential for interaction with PPP2R2D (PR55-delta) and subsequent inactivation of PP2A. Phosphorylated by PKA. As to expression, widely expressed with high levels in skeletal muscle and brain and lower levels in the pancreas.

The protein resides in the cytoplasm. Its function is as follows. Protein phosphatase inhibitor that specifically inhibits protein phosphatase 2A (PP2A) during mitosis. When phosphorylated at Ser-67 during mitosis, specifically interacts with PPP2R2D (PR55-delta) and inhibits its activity, leading to inactivation of PP2A, an essential condition to keep cyclin-B1-CDK1 activity high during M phase. Also acts as a stimulator of insulin secretion by interacting with sulfonylurea receptor (ABCC8), thereby preventing sulfonylurea from binding to its receptor and reducing K(ATP) channel currents. The sequence is that of Alpha-endosulfine (ENSA) from Homo sapiens (Human).